The following is a 322-amino-acid chain: Ribosomal RNA large subunit methyltransferase F (322 aa).

This sequence belongs to the methyltransferase superfamily. METTL16/RlmF family.

It is found in the cytoplasm. The enzyme catalyses adenosine(1618) in 23S rRNA + S-adenosyl-L-methionine = N(6)-methyladenosine(1618) in 23S rRNA + S-adenosyl-L-homocysteine + H(+). In terms of biological role, specifically methylates the adenine in position 1618 of 23S rRNA. This Cytophaga hutchinsonii (strain ATCC 33406 / DSM 1761 / CIP 103989 / NBRC 15051 / NCIMB 9469 / D465) protein is Ribosomal RNA large subunit methyltransferase F.